Here is a 245-residue protein sequence, read N- to C-terminus: Probable transcriptional regulatory protein APH_0480 (245 aa).

The protein belongs to the TACO1 family.

The protein localises to the cytoplasm. In Anaplasma phagocytophilum (strain HZ), this protein is Probable transcriptional regulatory protein APH_0480.